The sequence spans 274 residues: Shikimate dehydrogenase (NADP(+)) (274 aa).

Residues 14 to 16 (SKS) and Thr-61 each bind shikimate. Lys-65 functions as the Proton acceptor in the catalytic mechanism. 2 residues coordinate shikimate: Asn-86 and Asp-102. Residues 126-130 (GAGGA), 150-155 (NRTAEK), and Met-214 contribute to the NADP(+) site. Position 216 (Tyr-216) interacts with shikimate. NADP(+) is bound at residue Gly-239.

The protein belongs to the shikimate dehydrogenase family. In terms of assembly, homodimer.

The catalysed reaction is shikimate + NADP(+) = 3-dehydroshikimate + NADPH + H(+). The protein operates within metabolic intermediate biosynthesis; chorismate biosynthesis; chorismate from D-erythrose 4-phosphate and phosphoenolpyruvate: step 4/7. In terms of biological role, involved in the biosynthesis of the chorismate, which leads to the biosynthesis of aromatic amino acids. Catalyzes the reversible NADPH linked reduction of 3-dehydroshikimate (DHSA) to yield shikimate (SA). The sequence is that of Shikimate dehydrogenase (NADP(+)) from Pseudoalteromonas translucida (strain TAC 125).